The chain runs to 555 residues: Natural resistance-associated macrophage protein 1 (555 aa).

The Cytoplasmic segment spans residues 1–63 (MSGSGPAMAS…STPGFSFRKL (63 aa)). The helical transmembrane segment at 64 to 81 (WAFTGPGFLMSIAYLDPG) threads the bilayer. Over 82-90 (NVESDLQCG) the chain is Extracellular. A helical transmembrane segment spans residues 91–110 (AVAGFKLLWVLLWATVLGLL). Residues 111–147 (CQRLAIRLGVVTGKDLAEICYLYYPRVPRVLLWLMME) lie on the Cytoplasmic side of the membrane. The helical transmembrane segment at 148–168 (IAIIGSDMQEVIGTAIAFSLL) threads the bilayer. The Extracellular portion of the chain corresponds to 169-172 (SAGR). Residues 173 to 192 (IPLWGGVLITITDTLFFLFL) form a helical membrane-spanning segment. Topologically, residues 193–201 (DKYGLRKLE) are cytoplasmic. A helical transmembrane segment spans residues 202–222 (AFFGFLITIMALTFGYEYVMV). At 223-245 (RPAQTEVLKGIFLPYCPGCGREE) the chain is on the extracellular side. A helical membrane pass occupies residues 246 to 264 (LLQAVGIVGAIIMPHNIFL). Residues 265–292 (HSSLVKTRAIDRSKKEEVKEANMYFLTE) lie on the Cytoplasmic side of the membrane. The chain crosses the membrane as a helical span at residues 293 to 312 (SCLALFVSFLINLFVMAVFG). Residues 313 to 354 (EAFYHQRNEDVHNKCVNSSVSRYASIFPINNETVSVDIYQGG) lie on the Extracellular side of the membrane. N-linked (GlcNAc...) asparagine glycosylation is found at Asn-329 and Asn-343. The helical transmembrane segment at 355 to 374 (VILGCYFGAAALYIWAVGIL) threads the bilayer. The Cytoplasmic portion of the chain corresponds to 375 to 405 (AAGQSSTMTGTYAGQFVMEGFLQLRWSRFTR). Residues 406–423 (VLFTRSLAILPTLFVAAF) traverse the membrane as a helical segment. The Extracellular portion of the chain corresponds to 424–434 (RDVSQLTGMND). The helical transmembrane segment at 435-455 (LLNVLQSILLPFAVLPVLTFT) threads the bilayer. The Cytoplasmic portion of the chain corresponds to 456 to 471 (SLRPLMHDFANGLLGQ). The helical transmembrane segment at 472-493 (VLMSLITGLVCAINVYFVVDFL) threads the bilayer. Residues 494 to 501 (PTLRGLGY) are Extracellular-facing. The chain crosses the membrane as a helical span at residues 502 to 521 (LIPLGLLLVAYVAFVTYLLW). Residues 522-555 (TCSIAHGARFLARGRYNRFSFDVTADVPGLAGPH) lie on the Cytoplasmic side of the membrane.

Belongs to the NRAMP family. As to expression, macrophages; spleen and thymus and at lower level in liver and lung.

The protein resides in the late endosome membrane. It localises to the lysosome membrane. The enzyme catalyses Zn(2+)(in) + H(+)(out) = Zn(2+)(out) + H(+)(in). It catalyses the reaction Fe(2+)(in) + H(+)(out) = Fe(2+)(out) + H(+)(in). The catalysed reaction is Mn(2+)(in) + H(+)(out) = Mn(2+)(out) + H(+)(in). Its function is as follows. Macrophage-specific antiporter that fluxes metal ions in either direction against a proton gradient. Localized to late endosomal lysosomal membranes, delivers bivalent cations from the cytosol into these acidic compartments where they may directly affect antimicrobial activity. Involved in iron metabolism and host natural resistance to infection with intracellular parasites. Pathogen resistance involves sequestration of Fe(2+) and Mn(2+), cofactors of both prokaryotic and eukaryotic catalases and superoxide dismutases, not only to protect the macrophage against its own generation of reactive oxygen species, but to deny the cations to the pathogen for synthesis of its protective enzymes. This Gallus gallus (Chicken) protein is Natural resistance-associated macrophage protein 1 (SLC11A1).